We begin with the raw amino-acid sequence, 465 residues long: Argininosuccinate lyase (465 aa).

Belongs to the lyase 1 family. Argininosuccinate lyase subfamily.

The protein resides in the cytoplasm. The catalysed reaction is 2-(N(omega)-L-arginino)succinate = fumarate + L-arginine. It participates in amino-acid biosynthesis; L-arginine biosynthesis; L-arginine from L-ornithine and carbamoyl phosphate: step 3/3. This Nitrobacter winogradskyi (strain ATCC 25391 / DSM 10237 / CIP 104748 / NCIMB 11846 / Nb-255) protein is Argininosuccinate lyase.